The following is a 187-amino-acid chain: Peptide deformylase (187 aa).

Fe cation is bound by residues C96 and H138. E139 is a catalytic residue. H142 is a binding site for Fe cation.

The protein belongs to the polypeptide deformylase family. Fe(2+) is required as a cofactor.

The enzyme catalyses N-terminal N-formyl-L-methionyl-[peptide] + H2O = N-terminal L-methionyl-[peptide] + formate. Functionally, removes the formyl group from the N-terminal Met of newly synthesized proteins. Requires at least a dipeptide for an efficient rate of reaction. N-terminal L-methionine is a prerequisite for activity but the enzyme has broad specificity at other positions. The chain is Peptide deformylase from Brachyspira hyodysenteriae (strain ATCC 49526 / WA1).